The following is a 174-amino-acid chain: Co-chaperone protein HscB (174 aa).

Residues 2 to 74 (DYFTLFGLPA…LKRAEYMLSL (73 aa)) form the J domain.

The protein belongs to the HscB family. In terms of assembly, interacts with HscA and stimulates its ATPase activity. Interacts with IscU.

In terms of biological role, co-chaperone involved in the maturation of iron-sulfur cluster-containing proteins. Seems to help targeting proteins to be folded toward HscA. This is Co-chaperone protein HscB from Yersinia pestis bv. Antiqua (strain Antiqua).